Reading from the N-terminus, the 371-residue chain is Alginate lyase (371 aa).

The N-terminal stretch at 1–26 (MQSTDLKRLLIPSLLGLAIVTGSAQA) is a signal peptide. Substrate-binding positions include 67-68 (SK), 140-141 (HT), and tyrosine 258.

It belongs to the polysaccharide lyase 5 family.

The protein resides in the periplasm. It catalyses the reaction Eliminative cleavage of alginate to give oligosaccharides with 4-deoxy-alpha-L-erythro-hex-4-enuronosyl groups at their non-reducing ends and beta-D-mannuronate at their reducing end.. Catalyzes the depolymerization of alginate by cleaving the beta-1,4 glycosidic bond between two adjacent sugar residues via a beta-elimination mechanism. May serve to degrade mislocalized alginate that is trapped in the periplasmic space. This chain is Alginate lyase, found in Pseudomonas fluorescens (strain ATCC BAA-477 / NRRL B-23932 / Pf-5).